The chain runs to 165 residues: Cyclic pyranopterin monophosphate synthase (165 aa).

Residues 83 to 85 (FCH) and 120 to 121 (ME) each bind substrate. Aspartate 135 is a catalytic residue.

It belongs to the MoaC family. In terms of assembly, homohexamer; trimer of dimers.

It catalyses the reaction (8S)-3',8-cyclo-7,8-dihydroguanosine 5'-triphosphate = cyclic pyranopterin phosphate + diphosphate. The protein operates within cofactor biosynthesis; molybdopterin biosynthesis. Catalyzes the conversion of (8S)-3',8-cyclo-7,8-dihydroguanosine 5'-triphosphate to cyclic pyranopterin monophosphate (cPMP). The protein is Cyclic pyranopterin monophosphate synthase of Xanthomonas axonopodis pv. citri (strain 306).